A 479-amino-acid chain; its full sequence is MERDERPPSGGGGGGGSAGFLEPPAALPPPPRNGFCQDELAELDPSTISVPDDRAEQRTCLICGDRATGLHYGIISCEGCKGFFKRSICNKRVYRCSRDKNCVMSRKQRNRCQYCRLLKCLQMGMNRKAIREDGMPGGRNKSIGPVQISEEEIERIMSGQEFEEEANHWSNHGDSDHSSPGNRASESNQPSPGSTLSSRSVELNGFMAFRDQYMGMSVPPHYQYIPHLFSYSAHSPLLPPQARSLDPQSYSLIHQLVSAEDLEPLGTPMLIEDGYAVTQAELFALLCRLADELLFRQIAWIKKLPFFCELSIKDYTCLLSSTWQELILLSSLTVYSKQIFGELADVTAKYSPSDEELHRFSDEGMEVIERLIYLYHKFHQLKVSNEEYACMKAINFLNQDIRGLTSASQLEQLNKRYWYICQDFTEYKYTHQPNRFPDLMMCLPEIRYIAGKMVNVPLEQLPLLFKVVLHSCKTSVGKE.

A disordered region spans residues 1 to 32; the sequence is MERDERPPSGGGGGGGSAGFLEPPAALPPPPR. Over residues 9-18 the composition is skewed to gly residues; the sequence is SGGGGGGGSA. The nuclear receptor DNA-binding region spans 57–132; it reads QRTCLICGDR…MGMNRKAIRE (76 aa). 8 residues coordinate Zn(2+): cysteine 60, cysteine 63, cysteine 77, cysteine 80, cysteine 96, cysteine 102, cysteine 112, and cysteine 115. 2 consecutive NR C4-type zinc fingers follow at residues 60–80 and 96–120; these read CLIC…CEGC and CSRD…LLKC. Disordered regions lie at residues 131–150 and 162–198; these read REDG…QISE and FEEE…TLSS. Residues 165–177 are compositionally biased toward basic and acidic residues; that stretch reads EANHWSNHGDSDH. A sufficient for interaction with UIMC1 region spans residues 172-252; sequence HGDSDHSSPG…RSLDPQSYSL (81 aa). Over residues 178 to 198 the composition is skewed to polar residues; sequence SSPGNRASESNQPSPGSTLSS. One can recognise an NR LBD domain in the interval 248–479; it reads QSYSLIHQLV…HSCKTSVGKE (232 aa).

Belongs to the nuclear hormone receptor family. NR6 subfamily. As to quaternary structure, homodimer. Interacts with UIMC1.

The protein localises to the nucleus. Its function is as follows. Orphan nuclear receptor that binds to a response element containing the sequence 5'-TCAAGGTCA-3'. Acts as a regulator of embryonic stem cell pluripotency by mediating repression of POU5F1/OCT4: binds to the DR0 element within the POU5F1/OCT4 promoter and inhibits POU5F1/OCT4 expression during embryonic stem cell differentiation. Involved in the regulation of gene expression in germ cell development during gametogenesis. In Sus scrofa (Pig), this protein is Nuclear receptor subfamily 6 group A member 1 (NR6A1).